The following is a 418-amino-acid chain: Hydroxysteroid dehydrogenase-like protein 2 (418 aa).

NADP(+) contacts are provided by residues 17–23 (GASRGIG), Lys-42, and Asp-74. An N6-(2-hydroxyisobutyryl)lysine modification is found at Lys-42. Residue Lys-116 is modified to N6-acetyllysine. The Proton acceptor role is filled by Tyr-168. Residue Lys-172 coordinates NADP(+). The segment at 287–310 (STGAVPEFKEEKPQPQPKPRSGAV) is disordered. Residues 306–415 (RSGAVEETFR…KLEKLMNQMN (110 aa)) form the SCP2 domain. Residue Lys-318 is modified to N6-succinyllysine.

It belongs to the short-chain dehydrogenases/reductases (SDR) family.

The protein localises to the peroxisome. Its subcellular location is the mitochondrion. Its function is as follows. Has apparently no steroid dehydrogenase activity. Controls bile acid (BA) and lipid metabolism in response to nutritional cues. The chain is Hydroxysteroid dehydrogenase-like protein 2 (HSDL2) from Pongo abelii (Sumatran orangutan).